We begin with the raw amino-acid sequence, 833 residues long: MTFYNHKAIEPKWQAFWADNHTFKTGTDASKPKFYALDMFPYPSGAGLHVGHPEGYTATDILSRFKRAQGYNVLHPMGWDAFGLPAEQYAMDTGNDPAEFTAENIANFKRQINALGFSYDWDREINTTDPNYYKWTQWIFTKLYEKGLAYEAEVPVNWVEELGTAIANEEVLPDGTSERGGYPVVRKPMRQWMLKITAYAERLLADLEEVDWPESIKDMQRNWIGKSTGANVTFKVKDTDKDFTVFTTRPDTLFGATYAVLAPEHALVDSITTAEQAQAVAEYKRQASLKSDLARTDLAKEKTGVWTGAYAINPVNGKEMPIWIADYVLASYGTGAIMAVPAHDERDWAFAKQFNLEIIPVLEGGNVDEAAYTEDGIHINSDFLDGLDKACAIAKMVVWLEETGVGHEKVSYRLRDWLFSRQRYWGEPIPIIHWEDGTSTAVPEQDLPLVLPVTKDIRPSGTGESPLANLTDWLEVTREDGVKGRRETNTMPQWAGSSWYYLRYIDPHNDKQLADKDLLKQWLPVDIYIGGAEHAVLHLLYARFWHKVLYDLGVVPTKEPFQKLFNQGMILGTSYRDHRGALVATDKVDKRDGSFFHMETGEELEQAPAKMSKSLKNVVNPDDVVEQYGADTLRVYEMFMGPLDASIAWSEEGLEGARKFLDRVYRLITTKEIVAENSGALDKAYHETVKAVTEQIEGMKFNTAIAQLMIFVNAANKEDKLYVAYAKGFVQLLAPFAPHLGEELWQSLTASGQSISYVAWPTHDDSKLVENDVEIVVQIKGKVKAKLVVAKDLSREELEKVALAHDKIQAEIAGKEVIKVIAVPNKLVNIVVK.

A 'HIGH' region motif is present at residues 41 to 52; it reads PYPSGAGLHVGH. Residues 610-614 carry the 'KMSKS' region motif; that stretch reads KMSKS. Lys613 provides a ligand contact to ATP.

It belongs to the class-I aminoacyl-tRNA synthetase family.

It is found in the cytoplasm. It carries out the reaction tRNA(Leu) + L-leucine + ATP = L-leucyl-tRNA(Leu) + AMP + diphosphate. This Streptococcus equi subsp. zooepidemicus (strain H70) protein is Leucine--tRNA ligase.